Consider the following 202-residue polypeptide: Holliday junction branch migration complex subunit RuvA (202 aa).

The domain I stretch occupies residues 1 to 64; it reads MIGRLRGTLA…EDAQLLYGFA (64 aa). The domain II stretch occupies residues 65–143; sequence GKRERDFFRE…AWETSPAMFA (79 aa). The interval 144–154 is flexible linker; sequence LVPNQPDGPAP. Residues 154-202 are domain III; that stretch reads PVNTAENDAVSALISLGYKPQEASKAISAIKEKGLSSEDMIRRALKGMI.

This sequence belongs to the RuvA family. As to quaternary structure, homotetramer. Forms an RuvA(8)-RuvB(12)-Holliday junction (HJ) complex. HJ DNA is sandwiched between 2 RuvA tetramers; dsDNA enters through RuvA and exits via RuvB. An RuvB hexamer assembles on each DNA strand where it exits the tetramer. Each RuvB hexamer is contacted by two RuvA subunits (via domain III) on 2 adjacent RuvB subunits; this complex drives branch migration. In the full resolvosome a probable DNA-RuvA(4)-RuvB(12)-RuvC(2) complex forms which resolves the HJ.

Its subcellular location is the cytoplasm. Its function is as follows. The RuvA-RuvB-RuvC complex processes Holliday junction (HJ) DNA during genetic recombination and DNA repair, while the RuvA-RuvB complex plays an important role in the rescue of blocked DNA replication forks via replication fork reversal (RFR). RuvA specifically binds to HJ cruciform DNA, conferring on it an open structure. The RuvB hexamer acts as an ATP-dependent pump, pulling dsDNA into and through the RuvAB complex. HJ branch migration allows RuvC to scan DNA until it finds its consensus sequence, where it cleaves and resolves the cruciform DNA. This is Holliday junction branch migration complex subunit RuvA from Pseudomonas fluorescens (strain Pf0-1).